The chain runs to 174 residues: Small ribosomal subunit protein uS5 (174 aa).

Residues 19 to 82 (LREKMIAVNR…EQARRGMFKV (64 aa)) form the S5 DRBM domain.

It belongs to the universal ribosomal protein uS5 family. As to quaternary structure, part of the 30S ribosomal subunit. Contacts proteins S4 and S8.

Its function is as follows. With S4 and S12 plays an important role in translational accuracy. Located at the back of the 30S subunit body where it stabilizes the conformation of the head with respect to the body. The protein is Small ribosomal subunit protein uS5 of Bordetella bronchiseptica (strain ATCC BAA-588 / NCTC 13252 / RB50) (Alcaligenes bronchisepticus).